The primary structure comprises 223 residues: Large ribosomal subunit protein bL21 (223 aa).

It belongs to the bacterial ribosomal protein bL21 family. As to quaternary structure, part of the 50S ribosomal subunit. Contacts protein L20.

Its function is as follows. This protein binds to 23S rRNA in the presence of protein L20. The chain is Large ribosomal subunit protein bL21 from Mesorhizobium japonicum (strain LMG 29417 / CECT 9101 / MAFF 303099) (Mesorhizobium loti (strain MAFF 303099)).